Reading from the N-terminus, the 619-residue chain is ATP-dependent RNA helicase abstrakt (619 aa).

Residues methionine 1–serine 11 are compositionally biased toward basic residues. 2 disordered regions span residues methionine 1 to valine 25 and glutamate 50 to alanine 69. Residues serine 11, serine 13, serine 14, serine 56, serine 57, serine 58, and serine 66 each carry the phosphoserine modification. The Q motif signature appears at arginine 177–valine 205. A Helicase ATP-binding domain is found at leucine 208–isoleucine 392. ATP is bound at residue alanine 221–threonine 228. Positions aspartate 340 to aspartate 343 match the DEAD box motif. Positions asparagine 403–alanine 563 constitute a Helicase C-terminal domain. Residues histidine 577–lysine 594 form a CCHC-type zinc finger.

The protein belongs to the DEAD box helicase family. DDX41 subfamily.

It localises to the nucleus. The enzyme catalyses ATP + H2O = ADP + phosphate + H(+). ATP-dependent RNA helicase. Is essential for the directed and fasciculated early outgrowth of the bolwig nerves, as well as for its navigation at later stages. Is required during post-transcriptional gene expression. Plays a role during morphogenetic process, apoptosis and the establishment of cell polarity. In Drosophila melanogaster (Fruit fly), this protein is ATP-dependent RNA helicase abstrakt (abs).